The chain runs to 378 residues: MESDLIDLFEGAKKAADAAALDGVTSSGPEVSQCIDALKQLKKFPVTYDTLVATQVGKKLRSLAKHPVEDIKSVATDLLEIWKKVVIEETAKAKKTEGTNGCKEAKVNKMDVEKPSNPAPVKVQKLQRGDSAKSIKVERKEPDNKVVTGVKIERKVPDIKVTNGTKIDYRGQAVKDEKVSKDNQSSMKAPAKAANAPPKLTAMLKCNDPVRDKIRELLVEALCRVAGEADDYERESVNASDPLRVAVSVESLMFEKLGRSTGAQKLKYRSIMFNLRDSNNPDLRRRVLTGEISPEKLITLSAEDMASDKRKQENNQIKEKALFDCERGLAAKASTDQFKCGRCGQRKCTYYQMQTRSADEPMTTYVTCVNCDNHWKFC.

Residue methionine 1 is modified to N-acetylmethionine. The TFIIS N-terminal domain occupies 10 to 89; it reads EGAKKAADAA…EIWKKVVIEE (80 aa). Residues 210–333 enclose the TFIIS central domain; sequence VRDKIRELLV…DCERGLAAKA (124 aa). A TFIIS-type zinc finger spans residues 336–376; that stretch reads DQFKCGRCGQRKCTYYQMQTRSADEPMTTYVTCVNCDNHWK. Zn(2+) is bound by residues cysteine 340, cysteine 343, cysteine 368, and cysteine 371.

In terms of tissue distribution, expressed in roots, leaves and flowers.

The protein localises to the nucleus. Functionally, necessary for efficient RNA polymerase II transcription elongation past template-encoded arresting sites. Involved in the control of seed dormancy and germination. This Arabidopsis thaliana (Mouse-ear cress) protein is Transcription elongation factor TFIIS.